The following is a 226-amino-acid chain: PDGF-related-transforming protein sis (226 aa).

Over residues 201-215 the composition is skewed to basic residues; that stretch reads RRPPKGKHRKCKHTH. Residues 201–226 are disordered; it reads RRPPKGKHRKCKHTHDKTALKETLGA.

The protein belongs to the PDGF/VEGF growth factor family.

The chain is PDGF-related-transforming protein sis (V-SIS) from Woolly monkey sarcoma virus (WMSV).